The chain runs to 262 residues: Abhydrolase domain-containing protein ACTT2-2 (262 aa).

The Peroxisomal targeting signal type 1 signature appears at 260–262 (SKL).

It belongs to the AB hydrolase superfamily. AKT2 hydrolase family.

Its subcellular location is the peroxisome. It participates in mycotoxin biosynthesis. Abhydrolase domain-containing protein; part of the gene clusters that mediate the biosynthesis of the host-selective toxins (HSTs) ACT-toxins responsible for brown spot of tangerine disease by the tangerine pathotype which affects tangerines and mandarins. ACT-toxins consist of three moieties, 9,10-epoxy-8-hydroxy-9-methyl-decatrienoic acid (EDA), valine and a polyketide. ACT-toxin I is toxic to both citrus and pear; toxin II the 5''-deoxy derivative of ACT-toxin I, is highly toxic to pear and slightly toxic to citrus. On cellular level, ACT-toxins affect plasma membrane of susceptible cells and cause a sudden increase in loss of K(+) after a few minutes of toxin treatment. The acyl-CoA ligase ACTT1, the hydrolase ACTT2, the enoyl-CoA hydratases ACTT3 and ACTT6, and the acyl-CoA synthetase ACTT5 are all involved in the biosynthesis of the AK-, AF- and ACT-toxin common 9,10-epoxy-8-hydroxy-9-methyl-decatrienoic acid (EDA) structural moiety. The exact role of each enzyme, and of additional enzymes identified within the AF-toxin clusters have still to be determined. On the other hand, ACTTS1 to ACTTS4 are specific to the tangerine pathotype. The function of ACTTS3 is to elongate the polyketide chain portion of ACT-toxin that is unique to this toxin. The enoyl-reductase ACTTS2 might complement the missing enoyl-reductase (ER) domain in ACTTS3 in the synthesis of the polyketide portion of ACT-toxin. The roles of the nonribosomal peptide synthetases-related proteins ACTTS1 and ACTTS4 have also still not been elucidated. The sequence is that of Abhydrolase domain-containing protein ACTT2-2 (ACTT2-2) from Alternaria alternata (Alternaria rot fungus).